A 644-amino-acid polypeptide reads, in one-letter code: Threonine--tRNA ligase (644 aa).

Residues 1–61 (MVAITLPDGS…AHDAKVEIVT (61 aa)) enclose the TGS domain. The catalytic stretch occupies residues 242–533 (DHRKIGKALN…LIENYAGWMP (292 aa)). Zn(2+) is bound by residues Cys333, His384, and His510.

The protein belongs to the class-II aminoacyl-tRNA synthetase family. Homodimer. It depends on Zn(2+) as a cofactor.

It localises to the cytoplasm. It catalyses the reaction tRNA(Thr) + L-threonine + ATP = L-threonyl-tRNA(Thr) + AMP + diphosphate + H(+). Functionally, catalyzes the attachment of threonine to tRNA(Thr) in a two-step reaction: L-threonine is first activated by ATP to form Thr-AMP and then transferred to the acceptor end of tRNA(Thr). Also edits incorrectly charged L-seryl-tRNA(Thr). The chain is Threonine--tRNA ligase from Psychrobacter cryohalolentis (strain ATCC BAA-1226 / DSM 17306 / VKM B-2378 / K5).